A 1305-amino-acid chain; its full sequence is Rho GTPase-activating protein 33 (1305 aa).

The tract at residues 1 to 64 (MLQAQKQSDP…KPGKRLSAPR (64 aa)) is disordered. Ser-32 bears the Phosphoserine mark. Residues 83–192 (FGHIQLLLSP…CGPVLTWMEL (110 aa)) form the PX; atypical domain. The region spanning 210–272 (PAVAAAHVVK…PSECVELFTE (63 aa)) is the SH3 domain. Residues 339–534 (CDLGEHLSNS…FLLTHVEVLF (196 aa)) enclose the Rho-GAP domain. Disordered stretches follow at residues 575–818 (RTQG…LDIS), 864–1054 (LSDT…SFFS), and 1115–1305 (SYSG…RSYC). The segment covering 582–595 (TPTEPTTPKTPASP) has biased composition (low complexity). Ser-594 is modified (phosphoserine). The span at 596 to 608 (VERRKRERAEKQR) shows a compositional bias: basic and acidic residues. The span at 646-669 (SGSRPDTVTLRSAKSEESLSSQAS) shows a compositional bias: polar residues. Position 660 is a phosphoserine (Ser-660). The span at 694–733 (APAGSCESLSSSSSSSSSSSSSSSSESSAGGLGPLSGSPS) shows a compositional bias: low complexity. Ser-749 is modified (phosphoserine). Positions 774 to 786 (PGDPAPPASPAPP) are enriched in pro residues. Over residues 787–798 (ASASAFPPRATP) the composition is skewed to low complexity. A compositionally biased stretch (polar residues) spans 864–873 (LSDTCQQEIS). Over residues 895-915 (LLPPPLPLLRPGGAPPPPPKN) the composition is skewed to pro residues. Positions 916–940 (PARLMALALAERAQQVAEQQSQQEQ) are enriched in low complexity. Composition is skewed to polar residues over residues 992–1020 (RQQS…SQVS), 1039–1054 (SPCS…SFFS), and 1115–1125 (SYSGPSRSWSP). A Phosphotyrosine modification is found at Tyr-1188. Over residues 1194 to 1208 (GPRGPSPASSSSSSP) the composition is skewed to low complexity. Arg-1263 carries the omega-N-methylarginine modification. Over residues 1292–1305 (SWSLHSEGQTRSYC) the composition is skewed to polar residues.

The protein belongs to the PX domain-containing GAP family. In terms of assembly, specifically interacts with CDC42 and RHOQ/TC10 through its Rho-GAP domain. Interacts with NEK6. Highly expressed in brain and testis. Also expressed in white adipose tissue (WAT) and muscle at a low level.

It localises to the cell membrane. In terms of biological role, may be involved in several stages of intracellular trafficking. Could play an important role in the regulation of glucose transport by insulin. May act as a downstream effector of RHOQ/TC10 in the regulation of insulin-stimulated glucose transport. This Mus musculus (Mouse) protein is Rho GTPase-activating protein 33 (Arhgap33).